A 621-amino-acid chain; its full sequence is Auxin response factor 13 (621 aa).

A DNA-binding region (TF-B3) is located at residues 124-228 (FSKILTASDV…ELRFGIRRAK (105 aa)). Positions 508–600 (RSRIKVHMQG…EIKKMKLKNK (93 aa)) constitute a PB1 domain.

Belongs to the ARF family. Homodimers and heterodimers.

Its subcellular location is the nucleus. Functionally, auxin response factors (ARFs) are transcriptional factors that bind specifically to the DNA sequence 5'-TGTCTC-3' found in the auxin-responsive promoter elements (AuxREs). Could act as transcriptional activator or repressor. Formation of heterodimers with Aux/IAA proteins may alter their ability to modulate early auxin response genes expression. The polypeptide is Auxin response factor 13 (ARF13) (Arabidopsis thaliana (Mouse-ear cress)).